Consider the following 125-residue polypeptide: Allatostatin (125 aa).

An N-terminal signal peptide occupies residues 1 to 26; it reads MKTSAYNVYLGVVAAMLALLFVTINA. Residues 27-106 constitute a propeptide that is removed on maturation; that stretch reads APMEADDETA…SRLARQWRAD (80 aa). Residue glutamine 109 is modified to Pyrrolidone carboxylic acid.

It belongs to the allatostatin family.

Its subcellular location is the secreted. Its function is as follows. Strongly inhibits juvenile hormone biosynthesis in vitro by the corpora allata from fifth-stadium larvae and adult females. In Spodoptera frugiperda (Fall armyworm), this protein is Allatostatin.